Reading from the N-terminus, the 94-residue chain is DNA-directed RNA polymerase subunit omega (94 aa).

The protein belongs to the RNA polymerase subunit omega family. The RNAP catalytic core consists of 2 alpha, 1 beta, 1 beta' and 1 omega subunit. When a sigma factor is associated with the core the holoenzyme is formed, which can initiate transcription.

The enzyme catalyses RNA(n) + a ribonucleoside 5'-triphosphate = RNA(n+1) + diphosphate. Its function is as follows. Promotes RNA polymerase assembly. Latches the N- and C-terminal regions of the beta' subunit thereby facilitating its interaction with the beta and alpha subunits. This chain is DNA-directed RNA polymerase subunit omega, found in Shewanella pealeana (strain ATCC 700345 / ANG-SQ1).